Reading from the N-terminus, the 201-residue chain is Glycerol-3-phosphate acyltransferase (201 aa).

Transmembrane regions (helical) follow at residues Leu3 to Leu23, Trp53 to Gly73, His80 to Phe100, Ile115 to Phe135, and Phe153 to Tyr175.

Belongs to the PlsY family. Probably interacts with PlsX.

Its subcellular location is the cell inner membrane. The catalysed reaction is an acyl phosphate + sn-glycerol 3-phosphate = a 1-acyl-sn-glycero-3-phosphate + phosphate. The protein operates within lipid metabolism; phospholipid metabolism. Functionally, catalyzes the transfer of an acyl group from acyl-phosphate (acyl-PO(4)) to glycerol-3-phosphate (G3P) to form lysophosphatidic acid (LPA). This enzyme utilizes acyl-phosphate as fatty acyl donor, but not acyl-CoA or acyl-ACP. This Pasteurella multocida (strain Pm70) protein is Glycerol-3-phosphate acyltransferase.